A 251-amino-acid chain; its full sequence is uncharacterized protein (251 aa).

Position 12-21 (T12–G21) interacts with NADP(+). A substrate-binding site is contributed by S148. Y161 serves as the catalytic Proton acceptor.

It belongs to the short-chain dehydrogenases/reductases (SDR) family.

This is an uncharacterized protein from Bacillus subtilis (strain 168).